Here is a 136-residue protein sequence, read N- to C-terminus: Large ribosomal subunit protein uL16 (136 aa).

It belongs to the universal ribosomal protein uL16 family. In terms of assembly, part of the 50S ribosomal subunit.

In terms of biological role, binds 23S rRNA and is also seen to make contacts with the A and possibly P site tRNAs. The polypeptide is Large ribosomal subunit protein uL16 (Rickettsia felis (strain ATCC VR-1525 / URRWXCal2) (Rickettsia azadi)).